The following is a 347-amino-acid chain: Spermidine/putrescine import ATP-binding protein PotA (347 aa).

The ABC transporter domain maps to Leu6–Ile238. Gly40 to Thr47 contributes to the ATP binding site.

The protein belongs to the ABC transporter superfamily. Spermidine/putrescine importer (TC 3.A.1.11.1) family. As to quaternary structure, the complex is composed of two ATP-binding proteins (PotA), two transmembrane proteins (PotB and PotC) and a solute-binding protein (PotD).

The protein resides in the cell inner membrane. The catalysed reaction is ATP + H2O + polyamine-[polyamine-binding protein]Side 1 = ADP + phosphate + polyamineSide 2 + [polyamine-binding protein]Side 1.. Its function is as follows. Part of the ABC transporter complex PotABCD involved in spermidine/putrescine import. Responsible for energy coupling to the transport system. This chain is Spermidine/putrescine import ATP-binding protein PotA, found in Borrelia garinii subsp. bavariensis (strain ATCC BAA-2496 / DSM 23469 / PBi) (Borreliella bavariensis).